Here is a 163-residue protein sequence, read N- to C-terminus: Late embryogenesis abundant protein Dc3 (163 aa).

Disordered stretches follow at residues 1–117 (MASH…GGLM) and 139–163 (FGMA…ARTE). Composition is skewed to basic and acidic residues over residues 28 to 56 (TMKD…ESKD), 67 to 84 (GAVK…KEKT), and 91 to 113 (TKEK…KEKT). 6 repeat units span residues 32-42 (KAQAAKDKASE), 43-53 (MAGSARDRTVE), 65-75 (KAGAVKDKTCE), 76-86 (TAQAAKEKTGG), 87-97 (AMQATKEKASE), and 103-115 (KETA…KTGG). Residues 32 to 115 (KAQAAKDKAS…AVAGKEKTGG (84 aa)) form a 6 X 11 AA approximate repeats region. A compositionally biased stretch (low complexity) spans 152–163 (TTRVTRSSARTE).

It belongs to the LEA type 4 family.

This chain is Late embryogenesis abundant protein Dc3, found in Daucus carota (Wild carrot).